Consider the following 103-residue polypeptide: Small ribosomal subunit protein uS10 (103 aa).

The protein belongs to the universal ribosomal protein uS10 family. As to quaternary structure, part of the 30S ribosomal subunit.

Its function is as follows. Involved in the binding of tRNA to the ribosomes. The sequence is that of Small ribosomal subunit protein uS10 from Pseudomonas savastanoi pv. phaseolicola (strain 1448A / Race 6) (Pseudomonas syringae pv. phaseolicola (strain 1448A / Race 6)).